Here is a 163-residue protein sequence, read N- to C-terminus: Putative 4-hydroxy-4-methyl-2-oxoglutarate aldolase (163 aa).

Substrate contacts are provided by residues 76-79 (GDML) and R98. D99 is a binding site for a divalent metal cation.

It belongs to the class II aldolase/RraA-like family. As to quaternary structure, homotrimer. A divalent metal cation is required as a cofactor.

The enzyme catalyses 4-hydroxy-4-methyl-2-oxoglutarate = 2 pyruvate. It catalyses the reaction oxaloacetate + H(+) = pyruvate + CO2. In terms of biological role, catalyzes the aldol cleavage of 4-hydroxy-4-methyl-2-oxoglutarate (HMG) into 2 molecules of pyruvate. Also contains a secondary oxaloacetate (OAA) decarboxylase activity due to the common pyruvate enolate transition state formed following C-C bond cleavage in the retro-aldol and decarboxylation reactions. This chain is Putative 4-hydroxy-4-methyl-2-oxoglutarate aldolase, found in Pseudomonas entomophila (strain L48).